A 604-amino-acid polypeptide reads, in one-letter code: Elongation factor 4 (604 aa).

In terms of domain architecture, tr-type G spans 9–191 (DAIRNFCIIA…AVISRVPAPA (183 aa)). GTP is bound by residues 21–26 (DHGKST) and 138–141 (NKID).

Belongs to the TRAFAC class translation factor GTPase superfamily. Classic translation factor GTPase family. LepA subfamily.

The protein localises to the cell inner membrane. It carries out the reaction GTP + H2O = GDP + phosphate + H(+). In terms of biological role, required for accurate and efficient protein synthesis under certain stress conditions. May act as a fidelity factor of the translation reaction, by catalyzing a one-codon backward translocation of tRNAs on improperly translocated ribosomes. Back-translocation proceeds from a post-translocation (POST) complex to a pre-translocation (PRE) complex, thus giving elongation factor G a second chance to translocate the tRNAs correctly. Binds to ribosomes in a GTP-dependent manner. This chain is Elongation factor 4, found in Prosthecochloris aestuarii (strain DSM 271 / SK 413).